The chain runs to 171 residues: Cytochrome c-type biogenesis protein CcmE (171 aa).

Over 1–7 (MNRKQKR) the chain is Cytoplasmic. A helical; Signal-anchor for type II membrane protein transmembrane segment spans residues 8–28 (LAVIAGGMGFIAAAVLLVMFA). At 29-171 (FSQSVAYFYM…NPGEEAKATQ (143 aa)) the chain is on the periplasmic side. Heme-binding residues include His-124 and Tyr-128. The interval 132–171 (DVADRLKQQGLWKEGQGGQESPGKEGQGQENPGEEAKATQ) is disordered.

This sequence belongs to the CcmE/CycJ family.

Its subcellular location is the cell inner membrane. Functionally, heme chaperone required for the biogenesis of c-type cytochromes. Transiently binds heme delivered by CcmC and transfers the heme to apo-cytochromes in a process facilitated by CcmF and CcmH. The sequence is that of Cytochrome c-type biogenesis protein CcmE from Rhizobium leguminosarum bv. trifolii (strain WSM2304).